The primary structure comprises 95 residues: MSYTIQAQTRTEIGKGSSRRLRHAGKVPAVIYGAGKEPVSIVFDHKDIINIQTNEDFYTSVVTIVLDGKEVGVRAQAMQRHAFKPMIEHVDFVYA.

The protein belongs to the bacterial ribosomal protein bL25 family. As to quaternary structure, part of the 50S ribosomal subunit; part of the 5S rRNA/L5/L18/L25 subcomplex. Contacts the 5S rRNA. Binds to the 5S rRNA independently of L5 and L18.

In terms of biological role, this is one of the proteins that binds to the 5S RNA in the ribosome where it forms part of the central protuberance. The polypeptide is Large ribosomal subunit protein bL25 (Shewanella sp. (strain ANA-3)).